Here is a 180-residue protein sequence, read N- to C-terminus: Putative 5'(3')-deoxyribonucleotidase (180 aa).

The Nucleophile role is filled by D9. 3 residues coordinate Mg(2+): D9, D11, and D135. The Proton donor role is filled by D11.

The protein belongs to the 5'(3')-deoxyribonucleotidase family. The cofactor is Mg(2+).

Its function is as follows. Dephosphorylates the 5' and 2'(3')-phosphates of deoxyribonucleotides. The chain is Putative 5'(3')-deoxyribonucleotidase from Staphylococcus aureus (strain Mu50 / ATCC 700699).